The chain runs to 106 residues: Colipase A (106 aa).

The signal sequence occupies residues 1–11; it reads LLLVALAVAYA. The propeptide at 12–16 is enterostatin, activation peptide; that stretch reads VPDPR. Intrachain disulfides connect Cys28/Cys39, Cys34/Cys50, Cys38/Cys72, Cys60/Cys80, and Cys74/Cys98. Residue Trp63 coordinates taurodeoxycholate.

This sequence belongs to the colipase family. As to quaternary structure, forms a 1:1 stoichiometric complex with pancreatic lipase. In terms of tissue distribution, expressed by the pancreas.

The protein localises to the secreted. Functionally, colipase is a cofactor of pancreatic lipase. It allows the lipase to anchor itself to the lipid-water interface. Without colipase the enzyme is washed off by bile salts, which have an inhibitory effect on the lipase. Its function is as follows. Enterostatin has a biological activity as a satiety signal. This Equus caballus (Horse) protein is Colipase A (CLPS1).